The sequence spans 175 residues: ATP synthase subunit b (175 aa).

A helical transmembrane segment spans residues 20-40; sequence LIFWTAVTFVIVLVILKKIAW.

The protein belongs to the ATPase B chain family. As to quaternary structure, F-type ATPases have 2 components, F(1) - the catalytic core - and F(0) - the membrane proton channel. F(1) has five subunits: alpha(3), beta(3), gamma(1), delta(1), epsilon(1). F(0) has four main subunits: a(1), b(2) and c(10-14). The alpha and beta chains form an alternating ring which encloses part of the gamma chain. F(1) is attached to F(0) by a central stalk formed by the gamma and epsilon chains, while a peripheral stalk is formed by the delta and b chains.

Its subcellular location is the cell inner membrane. Functionally, f(1)F(0) ATP synthase produces ATP from ADP in the presence of a proton or sodium gradient. F-type ATPases consist of two structural domains, F(1) containing the extramembraneous catalytic core and F(0) containing the membrane proton channel, linked together by a central stalk and a peripheral stalk. During catalysis, ATP synthesis in the catalytic domain of F(1) is coupled via a rotary mechanism of the central stalk subunits to proton translocation. Its function is as follows. Component of the F(0) channel, it forms part of the peripheral stalk, linking F(1) to F(0). The sequence is that of ATP synthase subunit b from Chlorobaculum parvum (strain DSM 263 / NCIMB 8327) (Chlorobium vibrioforme subsp. thiosulfatophilum).